Here is a 337-residue protein sequence, read N- to C-terminus: Ribonucleoside-diphosphate reductase small subunit (337 aa).

A disordered region spans residues 1–22 (MDPAVSPASTDPLDTHASGAGA). Fe cation is bound by residues Asp91, Glu121, and His124. Tyr128 is a catalytic residue. The helical transmembrane segment at 177–197 (FILMILIEGVFFAASFAAIAY) threads the bilayer. Residues Glu184, Glu218, and His221 each contribute to the Fe cation site.

It belongs to the ribonucleoside diphosphate reductase small chain family. In terms of assembly, heterotetramer composed of a homodimer of the large subunit (R1) and a homodimer of the small subunit (R2). Larger multisubunit protein complex are also active, composed of (R1)n(R2)n. Fe cation serves as cofactor.

The protein resides in the host membrane. It catalyses the reaction a 2'-deoxyribonucleoside 5'-diphosphate + [thioredoxin]-disulfide + H2O = a ribonucleoside 5'-diphosphate + [thioredoxin]-dithiol. In terms of biological role, ribonucleoside-diphosphate reductase holoenzyme provides the precursors necessary for viral DNA synthesis. Allows virus growth in non-dividing cells, as well as reactivation from latency in infected hosts. Catalyzes the biosynthesis of deoxyribonucleotides from the corresponding ribonucleotides. In Human herpesvirus 2 (strain 333) (HHV-2), this protein is Ribonucleoside-diphosphate reductase small subunit.